Here is a 200-residue protein sequence, read N- to C-terminus: Putative HMP/thiamine-binding protein YkoF (200 aa).

Thiamine is bound by residues Leu-17 and Thr-49.

As to quaternary structure, homodimer in vitro. In vivo, may be a part of an ABC transporter complex which is composed of two ATP-binding proteins (YkoD), two transmembrane proteins (YkoC and YkoE) and a solute-binding protein (YkoF).

In terms of biological role, part of the ABC transporter complex YkoCDEF that could transport hydroxymethylpyrimidine (HMP) and/or thiamine. Could also transport other HMP-containing products. Binds thiamine via its HMP moiety. This chain is Putative HMP/thiamine-binding protein YkoF (ykoF), found in Bacillus subtilis (strain 168).